The following is a 482-amino-acid chain: GDP-D-glucose phosphorylase 1 (482 aa).

The disordered stretch occupies residues 1 to 21 (MEPFPRILDDRLPRNMRRPRP). Residue His-255 is the Tele-GMP-histidine intermediate of the active site. A disordered region spans residues 461–482 (MPRSPSIRHRSSTRAQSDEGSK).

This sequence belongs to the GDPGP1 family. In terms of tissue distribution, expressed throughout the neuronal system, in the spermatheca and anterior hypodermal cells.

It is found in the cytoplasm. The enzyme catalyses GDP-alpha-D-glucose + phosphate = alpha-D-glucose 1-phosphate + GDP + H(+). Functionally, specific and highly efficient GDP-D-glucose phosphorylase regulating the levels of GDP-D-glucose in cells. This Caenorhabditis elegans protein is GDP-D-glucose phosphorylase 1.